Reading from the N-terminus, the 176-residue chain is Odorant-binding protein 2a (176 aa).

Residues 1-19 (MKSLLLTILLLGLVAVLKA) form the signal peptide. N-linked (GlcNAc...) asparagine glycosylation is found at Asn-42 and Asn-124. Cys-79 and Cys-172 are disulfide-bonded.

Belongs to the calycin superfamily. Lipocalin family. As to expression, expressed in the liver (at protein level). Expressed in epididymis.

The protein localises to the secreted. Involved in the regulation of systematic glucose homeostasis and insulin sensitivity. Involved in the regulation of liver lipid levels by positive regulation of hepatic lipogenesis and negative regulation of fatty acid beta-oxidation; via downstream transcriptional regulation of CPT1A and hepatic lipogenic program gene expression. May regulate hepatic lipogenesis and fatty acid beta-oxidation in an autocrine or paracrine manner. The chain is Odorant-binding protein 2a (Obp2a) from Mus musculus (Mouse).